Here is a 476-residue protein sequence, read N- to C-terminus: Siroheme synthase (476 aa).

The segment at Met-1 to Leu-207 is precorrin-2 dehydrogenase /sirohydrochlorin ferrochelatase. NAD(+) contacts are provided by residues Lys-25–Val-26 and Pro-46–Ser-47. Ser-132 carries the phosphoserine modification. The tract at residues Gly-220–Leu-476 is uroporphyrinogen-III C-methyltransferase. The active-site Proton acceptor is Asp-252. Lys-274 acts as the Proton donor in catalysis. S-adenosyl-L-methionine is bound by residues Gly-305–Asp-307, Val-310, Thr-335–Ala-336, Met-387, and Gly-416.

In the N-terminal section; belongs to the precorrin-2 dehydrogenase / sirohydrochlorin ferrochelatase family. It in the C-terminal section; belongs to the precorrin methyltransferase family.

The enzyme catalyses uroporphyrinogen III + 2 S-adenosyl-L-methionine = precorrin-2 + 2 S-adenosyl-L-homocysteine + H(+). The catalysed reaction is precorrin-2 + NAD(+) = sirohydrochlorin + NADH + 2 H(+). It carries out the reaction siroheme + 2 H(+) = sirohydrochlorin + Fe(2+). Its pathway is cofactor biosynthesis; adenosylcobalamin biosynthesis; precorrin-2 from uroporphyrinogen III: step 1/1. It participates in cofactor biosynthesis; adenosylcobalamin biosynthesis; sirohydrochlorin from precorrin-2: step 1/1. The protein operates within porphyrin-containing compound metabolism; siroheme biosynthesis; precorrin-2 from uroporphyrinogen III: step 1/1. It functions in the pathway porphyrin-containing compound metabolism; siroheme biosynthesis; siroheme from sirohydrochlorin: step 1/1. Its pathway is porphyrin-containing compound metabolism; siroheme biosynthesis; sirohydrochlorin from precorrin-2: step 1/1. In terms of biological role, multifunctional enzyme that catalyzes the SAM-dependent methylations of uroporphyrinogen III at position C-2 and C-7 to form precorrin-2 via precorrin-1. Then it catalyzes the NAD-dependent ring dehydrogenation of precorrin-2 to yield sirohydrochlorin. Finally, it catalyzes the ferrochelation of sirohydrochlorin to yield siroheme. This Xylella fastidiosa (strain 9a5c) protein is Siroheme synthase.